An 814-amino-acid polypeptide reads, in one-letter code: Leucine-rich repeat-containing protein 41 (814 aa).

The interaction with Elongin BC complex stretch occupies residues 45 to 54 (ALFELCGRAV). Phosphoserine occurs at positions 155, 276, and 326. Positions 265 to 408 (LCGEASRGRA…KKGARTRQGC (144 aa)) are disordered. The residue at position 327 (Thr-327) is a Phosphothreonine. The span at 354–385 (TKRPPSAPATTSSASASSSTSSSKRAPASSAP) shows a compositional bias: low complexity. Residue Ser-375 is modified to Phosphoserine. Residues 389–403 (PLKRFKRAAGKKGAR) are compositionally biased toward basic residues. LRR repeat units lie at residues 489 to 509 (WVSL…IFRL), 520 to 532 (AGCR…LSDL), 533 to 557 (FSPL…VLSI), 615 to 637 (SGSL…FGLV), 638 to 661 (LQTL…LADC), 703 to 730 (NSTL…VFSE), and 733 to 754 (SSSL…LLEF).

Part of a E3 ubiquitin ligase complex with elongin BC complex (ELOB and ELOC), RBX1 and CUL5.

The chain is Leucine-rich repeat-containing protein 41 (LRRC41) from Bos taurus (Bovine).